Reading from the N-terminus, the 213-residue chain is Orotate phosphoribosyltransferase (213 aa).

Lys26 provides a ligand contact to 5-phospho-alpha-D-ribose 1-diphosphate. 34–35 (FF) lines the orotate pocket. Residues 72-73 (YK), Arg99, Lys100, Lys103, His105, and 124-132 (DDVITAGTA) contribute to the 5-phospho-alpha-D-ribose 1-diphosphate site. Orotate contacts are provided by Thr128 and Arg156.

This sequence belongs to the purine/pyrimidine phosphoribosyltransferase family. PyrE subfamily. As to quaternary structure, homodimer. Requires Mg(2+) as cofactor.

The catalysed reaction is orotidine 5'-phosphate + diphosphate = orotate + 5-phospho-alpha-D-ribose 1-diphosphate. The protein operates within pyrimidine metabolism; UMP biosynthesis via de novo pathway; UMP from orotate: step 1/2. Its function is as follows. Catalyzes the transfer of a ribosyl phosphate group from 5-phosphoribose 1-diphosphate to orotate, leading to the formation of orotidine monophosphate (OMP). The chain is Orotate phosphoribosyltransferase from Vibrio atlanticus (strain LGP32) (Vibrio splendidus (strain Mel32)).